The chain runs to 39 residues: Phospholipase A2 (39 aa).

His36 is an active-site residue.

Belongs to the phospholipase A2 family. Group III subfamily. Ca(2+) serves as cofactor. In terms of tissue distribution, expressed by the venom gland.

The protein resides in the secreted. The enzyme catalyses a 1,2-diacyl-sn-glycero-3-phosphocholine + H2O = a 1-acyl-sn-glycero-3-phosphocholine + a fatty acid + H(+). In terms of biological role, PLA2 catalyzes the calcium-dependent hydrolysis of the 2-acyl groups in 3-sn-phosphoglycerides. This is Phospholipase A2 from Heloderma horridum horridum (Mexican beaded lizard).